The primary structure comprises 951 residues: Valine--tRNA ligase (951 aa).

Residues 42–52 (PNVTGSLHMGH) carry the 'HIGH' region motif. The short motif at 554-558 (KMSKS) is the 'KMSKS' region element. Residue lysine 557 participates in ATP binding. Positions 880–944 (AGLINKEDEL…AEAKAKLIEQ (65 aa)) form a coiled coil.

It belongs to the class-I aminoacyl-tRNA synthetase family. ValS type 1 subfamily. In terms of assembly, monomer.

The protein resides in the cytoplasm. The catalysed reaction is tRNA(Val) + L-valine + ATP = L-valyl-tRNA(Val) + AMP + diphosphate. Catalyzes the attachment of valine to tRNA(Val). As ValRS can inadvertently accommodate and process structurally similar amino acids such as threonine, to avoid such errors, it has a 'posttransfer' editing activity that hydrolyzes mischarged Thr-tRNA(Val) in a tRNA-dependent manner. This is Valine--tRNA ligase from Salmonella paratyphi A (strain ATCC 9150 / SARB42).